A 312-amino-acid polypeptide reads, in one-letter code: Malate dehydrogenase (312 aa).

NAD(+) contacts are provided by residues 12–17 (GAGFTG) and Asp36. Residues Arg87 and Arg93 each contribute to the substrate site. NAD(+) contacts are provided by residues Asn100 and 123-125 (LTN). A substrate-binding site is contributed by Asn125. Ser149 is modified (phosphoserine). Arg156 serves as a coordination point for substrate. His180 (proton acceptor) is an active-site residue.

This sequence belongs to the LDH/MDH superfamily. MDH type 3 family.

The enzyme catalyses (S)-malate + NAD(+) = oxaloacetate + NADH + H(+). Catalyzes the reversible oxidation of malate to oxaloacetate. In Geobacillus thermodenitrificans, this protein is Malate dehydrogenase.